Here is a 377-residue protein sequence, read N- to C-terminus: LIM/homeobox protein Lhx9 (377 aa).

LIM zinc-binding domains lie at 50-111 (ALCA…RFSV) and 112-174 (QRCA…LVQG). Disordered regions lie at residues 228 to 249 (NEND…QKTK), 309 to 346 (RQEN…TDLT), and 358 to 377 (SSLD…TNLF). The homeobox DNA-binding region spans 248–307 (TKXMRTSFKHHQLRTMKSYFAINHNPDAKDLKQLAQKTGLTKRVLQVWFQNARAKFRRNV). A compositionally biased stretch (low complexity) spans 333–346 (LTPPSTATTLTDLT). Residues 365–377 (SGSPPQTTLTNLF) are compositionally biased toward polar residues.

Its subcellular location is the nucleus. In terms of biological role, may be involved in gonadal development. The chain is LIM/homeobox protein Lhx9 (lhx9) from Psalidodon fasciatus (Banded astyanax).